The primary structure comprises 337 residues: Angiopoietin-related protein 7 (337 aa).

Positions 1–21 (MLRETWLCVILVAFVSHPVWL) are cleaved as a signal peptide. Residues 30 to 110 (QLKAAGCCEE…DIMQLQAAQT (81 aa)) adopt a coiled-coil conformation. Asn-49 is a glycosylation site (N-linked (GlcNAc...) asparagine). Residues 113–334 (QTSADAIYDC…RVEMKIRPEA (222 aa)) enclose the Fibrinogen C-terminal domain. Cys-122 and Cys-153 are oxidised to a cystine. Residues Asn-244 and Asn-258 are each glycosylated (N-linked (GlcNAc...) asparagine). An intrachain disulfide couples Cys-276 to Cys-289. An N-linked (GlcNAc...) asparagine glycan is attached at Asn-320.

In terms of assembly, homotetramer; disulfide-linked.

Its subcellular location is the secreted. In terms of biological role, has a role in the formation and organization of the extracellular matrix. In the eye, it functions as a mediator of dexamethasone-induced matrix deposition in the trabecular meshwork, the tissue responsible for the outflow of the ocular aqueous humor and for the maintenance of intraocular pressure. Is a negative regulator of angiogenesis in the cornea, and plays a major role in maintaining corneal avascularity and transparency. The sequence is that of Angiopoietin-related protein 7 (Angptl7) from Mus musculus (Mouse).